A 258-amino-acid chain; its full sequence is MTKLGIHGGSGKMGTMIYECAQNFTNIEISAIYSIEPLKYSPNCIVTNDLQKLFENCDAVIDFTIKDGAIALLNYAKSHPKPICMGTTALGSEGEALLKECGKKMPVIYATNMSLGVAVLNSLTAQASKILRDFDCEIVEMHHRHKKDAPSGTAMTLAKTVANARGLDLEKVRISGRDGMIGERKKDEIAVMSLRGGDIVGRHSVGFYNDGEFIELNHTATSRATFANGAIKAALWVINQENGLYDINDCLGIKKCVR.

Residues 8 to 13 (GGSGKM), 86 to 88 (GTT), and 110 to 113 (ATNM) contribute to the NAD(+) site. His142 (proton donor/acceptor) is an active-site residue. Position 143 (His143) interacts with (S)-2,3,4,5-tetrahydrodipicolinate. The Proton donor role is filled by Lys146. 152-153 (GT) is a binding site for (S)-2,3,4,5-tetrahydrodipicolinate.

The protein belongs to the DapB family.

It is found in the cytoplasm. The catalysed reaction is (S)-2,3,4,5-tetrahydrodipicolinate + NAD(+) + H2O = (2S,4S)-4-hydroxy-2,3,4,5-tetrahydrodipicolinate + NADH + H(+). It catalyses the reaction (S)-2,3,4,5-tetrahydrodipicolinate + NADP(+) + H2O = (2S,4S)-4-hydroxy-2,3,4,5-tetrahydrodipicolinate + NADPH + H(+). Its pathway is amino-acid biosynthesis; L-lysine biosynthesis via DAP pathway; (S)-tetrahydrodipicolinate from L-aspartate: step 4/4. Its function is as follows. Catalyzes the conversion of 4-hydroxy-tetrahydrodipicolinate (HTPA) to tetrahydrodipicolinate. The polypeptide is 4-hydroxy-tetrahydrodipicolinate reductase (Campylobacter hominis (strain ATCC BAA-381 / DSM 21671 / CCUG 45161 / LMG 19568 / NCTC 13146 / CH001A)).